Consider the following 275-residue polypeptide: 3-methyl-2-oxobutanoate hydroxymethyltransferase (275 aa).

Positions 49 and 88 each coordinate Mg(2+). Residues 49 to 50, aspartate 88, and lysine 118 each bind 3-methyl-2-oxobutanoate; that span reads DS. Residue glutamate 120 participates in Mg(2+) binding. Glutamate 187 (proton acceptor) is an active-site residue.

The protein belongs to the PanB family. In terms of assembly, homodecamer; pentamer of dimers. It depends on Mg(2+) as a cofactor.

Its subcellular location is the cytoplasm. The catalysed reaction is 3-methyl-2-oxobutanoate + (6R)-5,10-methylene-5,6,7,8-tetrahydrofolate + H2O = 2-dehydropantoate + (6S)-5,6,7,8-tetrahydrofolate. The protein operates within cofactor biosynthesis; (R)-pantothenate biosynthesis; (R)-pantoate from 3-methyl-2-oxobutanoate: step 1/2. In terms of biological role, catalyzes the reversible reaction in which hydroxymethyl group from 5,10-methylenetetrahydrofolate is transferred onto alpha-ketoisovalerate to form ketopantoate. This Bartonella quintana (strain Toulouse) (Rochalimaea quintana) protein is 3-methyl-2-oxobutanoate hydroxymethyltransferase.